A 185-amino-acid chain; its full sequence is Segregation and condensation protein B (185 aa).

It belongs to the ScpB family. In terms of assembly, homodimer. Homodimerization may be required to stabilize the binding of ScpA to the Smc head domains. Component of a cohesin-like complex composed of ScpA, ScpB and the Smc homodimer, in which ScpA and ScpB bind to the head domain of Smc. The presence of the three proteins is required for the association of the complex with DNA.

The protein localises to the cytoplasm. Functionally, participates in chromosomal partition during cell division. May act via the formation of a condensin-like complex containing Smc and ScpA that pull DNA away from mid-cell into both cell halves. This chain is Segregation and condensation protein B, found in Alkaliphilus oremlandii (strain OhILAs) (Clostridium oremlandii (strain OhILAs)).